The following is a 219-amino-acid chain: 3-dehydroquinate dehydratase (219 aa).

3-dehydroquinate contacts are provided by residues 28 to 30 (ELR) and Arg-61. His-116 serves as the catalytic Proton donor/acceptor. The active-site Schiff-base intermediate with substrate is the Lys-142. Positions 180 and 203 each coordinate 3-dehydroquinate.

It belongs to the type-I 3-dehydroquinase family. As to quaternary structure, homodimer.

It catalyses the reaction 3-dehydroquinate = 3-dehydroshikimate + H2O. It functions in the pathway metabolic intermediate biosynthesis; chorismate biosynthesis; chorismate from D-erythrose 4-phosphate and phosphoenolpyruvate: step 3/7. Functionally, involved in the third step of the chorismate pathway, which leads to the biosynthesis of aromatic amino acids. Catalyzes the cis-dehydration of 3-dehydroquinate (DHQ) and introduces the first double bond of the aromatic ring to yield 3-dehydroshikimate. This chain is 3-dehydroquinate dehydratase, found in Aquifex aeolicus (strain VF5).